The sequence spans 621 residues: 1-deoxy-D-xylulose-5-phosphate synthase (621 aa).

Thiamine diphosphate is bound by residues H80 and G121–S123. D152 is a binding site for Mg(2+). Residues G153–A154, N181, Y288, and E370 contribute to the thiamine diphosphate site. Position 181 (N181) interacts with Mg(2+).

The protein belongs to the transketolase family. DXPS subfamily. As to quaternary structure, homodimer. The cofactor is Mg(2+). It depends on thiamine diphosphate as a cofactor.

It catalyses the reaction D-glyceraldehyde 3-phosphate + pyruvate + H(+) = 1-deoxy-D-xylulose 5-phosphate + CO2. Its pathway is metabolic intermediate biosynthesis; 1-deoxy-D-xylulose 5-phosphate biosynthesis; 1-deoxy-D-xylulose 5-phosphate from D-glyceraldehyde 3-phosphate and pyruvate: step 1/1. Functionally, catalyzes the acyloin condensation reaction between C atoms 2 and 3 of pyruvate and glyceraldehyde 3-phosphate to yield 1-deoxy-D-xylulose-5-phosphate (DXP). The polypeptide is 1-deoxy-D-xylulose-5-phosphate synthase (Edwardsiella ictaluri (strain 93-146)).